The chain runs to 186 residues: NADH-quinone oxidoreductase subunit B (186 aa).

Cys-44, Cys-45, Cys-110, and Cys-139 together coordinate [4Fe-4S] cluster.

This sequence belongs to the complex I 20 kDa subunit family. As to quaternary structure, NDH-1 is composed of 14 different subunits. Subunits NuoB, C, D, E, F, and G constitute the peripheral sector of the complex. [4Fe-4S] cluster serves as cofactor.

It localises to the cell inner membrane. It catalyses the reaction a quinone + NADH + 5 H(+)(in) = a quinol + NAD(+) + 4 H(+)(out). NDH-1 shuttles electrons from NADH, via FMN and iron-sulfur (Fe-S) centers, to quinones in the respiratory chain. The immediate electron acceptor for the enzyme in this species is believed to be ubiquinone. Couples the redox reaction to proton translocation (for every two electrons transferred, four hydrogen ions are translocated across the cytoplasmic membrane), and thus conserves the redox energy in a proton gradient. The sequence is that of NADH-quinone oxidoreductase subunit B from Leptospira interrogans serogroup Icterohaemorrhagiae serovar copenhageni (strain Fiocruz L1-130).